We begin with the raw amino-acid sequence, 961 residues long: Lon protease homolog, mitochondrial (961 aa).

The transit peptide at 1 to 67 directs the protein to the mitochondrion; the sequence is MAGGTGCVRL…SPAAAGHWRG (67 aa). 2 disordered regions span residues 76–103 and 220–262; these read GGGAFSGGEDASEGGAEDGASGVGGSAG and QLEV…VVVG. The Lon N-terminal domain maps to 125–371; it reads LPLIAVTRNP…KALSLLKKEF (247 aa). Positions 235-244 are enriched in basic residues; it reads KLRKKPKRGK. The segment covering 245 to 257 has biased composition (basic and acidic residues); that stretch reads KEAEEDGATKRPL. Residue 524–531 coordinates ATP; the sequence is GPPGVGKT. The 192-residue stretch at 760–951 folds into the Lon proteolytic domain; the sequence is VTPPGVVMGL…REIFDIAFPE (192 aa). Basic and acidic residues predominate over residues 784 to 801; it reads SLRRPRDRDSDKGDKDGS. The disordered stretch occupies residues 784–803; sequence SLRRPRDRDSDKGDKDGSLE. Catalysis depends on residues serine 857 and lysine 900.

The protein belongs to the peptidase S16 family. Homohexamer. Organized in a ring with a central cavity. The ATP-binding and proteolytic domains (AP-domain) form a hexameric chamber, while the N-terminal domain is arranged as a trimer of dimers. DNA and RNA binding is stimulated by substrate and inhibited by ATP binding. Interacts with TWNK and mitochondrial DNA polymerase subunit POLG.

It localises to the mitochondrion matrix. It catalyses the reaction Hydrolysis of proteins in presence of ATP.. Its function is as follows. ATP-dependent serine protease that mediates the selective degradation of misfolded, unassembled or oxidatively damaged polypeptides as well as certain short-lived regulatory proteins in the mitochondrial matrix. Endogenous substrates include mitochondrial steroidogenic acute regulatory (StAR) protein, DELE1, helicase Twinkle (TWNK) and the large ribosomal subunit protein MRPL32/bL32m. MRPL32/bL32m is protected from degradation by LONP1 when it is bound to a nucleic acid (RNA), but TWNK is not. May also have a chaperone function in the assembly of inner membrane protein complexes. Participates in the regulation of mitochondrial gene expression and in the maintenance of the integrity of the mitochondrial genome. Binds to mitochondrial promoters and RNA in a single-stranded, site-specific, and strand-specific manner. May regulate mitochondrial DNA replication and/or gene expression using site-specific, single-stranded DNA binding to target the degradation of regulatory proteins binding to adjacent sites in mitochondrial promoters. In Bos taurus (Bovine), this protein is Lon protease homolog, mitochondrial.